The chain runs to 180 residues: Regulator of G-protein signaling 8 (180 aa).

At serine 26 the chain carries Phosphoserine. The RGS domain occupies 56 to 171; sequence SFDVLLSHKY…FLRSKMYLDL (116 aa).

Interacts with GNAO1 and GNAI3. In terms of tissue distribution, expressed at high levels in brain. Very little expression detected in other tissues. Detected in Purkinje cells in the cerebellum.

It is found in the cell membrane. The protein localises to the membrane. Its subcellular location is the perikaryon. It localises to the cell projection. The protein resides in the dendrite. It is found in the nucleus. Functionally, regulates G protein-coupled receptor signaling cascades, including signaling via muscarinic acetylcholine receptor CHRM2 and dopamine receptor DRD2. Inhibits signal transduction by increasing the GTPase activity of G protein alpha subunits, thereby driving them into their inactive GDP-bound form. Modulates the activity of potassium channels that are activated in response to DRD2 and CHRM2 signaling. This is Regulator of G-protein signaling 8 (Rgs8) from Rattus norvegicus (Rat).